The sequence spans 118 residues: Na(+)/H(+) antiporter subunit G1 (118 aa).

3 helical membrane passes run 9-29 (VSII…TGLI), 47-67 (LGAM…EGYV), and 69-89 (MQLI…SHLI).

Belongs to the CPA3 antiporters (TC 2.A.63) subunit G family. In terms of assembly, may form a heterooligomeric complex that consists of seven subunits: mnhA1, mnhB1, mnhC1, mnhD1, mnhE1, mnhF1 and mnhG1.

The protein resides in the cell membrane. Its function is as follows. Mnh complex is a Na(+)/H(+) antiporter involved in Na(+) excretion. The protein is Na(+)/H(+) antiporter subunit G1 (mnhG1) of Staphylococcus epidermidis (strain ATCC 35984 / DSM 28319 / BCRC 17069 / CCUG 31568 / BM 3577 / RP62A).